Here is a 391-residue protein sequence, read N- to C-terminus: MSPTLLLTEQLIAHPSVTPDDAGCLDLLARRLAPLGFACERLDSGPENFRVSNLWSKRTAARSGQAQAATKTVVFAGHTDVVPTGPVEQWSSPPFTPTHRDGRLYGRGASDMKASIAAFVVAVEEFLAATPDPRLDIALLLTSDEEGPSVDGTKVVIEQLRARGERLDWCIVGEPTSVEQTGDMIKNGRRGTLSGRLTVRGVQGHIAYPQLARNPIHQAVPALTELAATVWDEGNAFFPPTSWQMSNIHGGTGATNVIPGQVVIDFNFRFSTESTAEGLQQRVHAVLDRHGLEYDLTWTLGGQPFLTTPGELVQAVQQAIRAETGLETELSTTGGTSDGRFIAQICPQVIELGPPNASIHKIDENVRLVDIEPLKNIYRRTLDHLNALAGA.

Residue His78 coordinates Zn(2+). Residue Asp80 is part of the active site. Asp111 provides a ligand contact to Zn(2+). Residue Glu145 is the Proton acceptor of the active site. Glu146, Glu174, and His360 together coordinate Zn(2+).

This sequence belongs to the peptidase M20A family. DapE subfamily. Homodimer. Zn(2+) is required as a cofactor. It depends on Co(2+) as a cofactor.

It carries out the reaction N-succinyl-(2S,6S)-2,6-diaminopimelate + H2O = (2S,6S)-2,6-diaminopimelate + succinate. It functions in the pathway amino-acid biosynthesis; L-lysine biosynthesis via DAP pathway; LL-2,6-diaminopimelate from (S)-tetrahydrodipicolinate (succinylase route): step 3/3. Catalyzes the hydrolysis of N-succinyl-L,L-diaminopimelic acid (SDAP), forming succinate and LL-2,6-diaminopimelate (DAP), an intermediate involved in the bacterial biosynthesis of lysine and meso-diaminopimelic acid, an essential component of bacterial cell walls. The chain is Succinyl-diaminopimelate desuccinylase from Acidovorax ebreus (strain TPSY) (Diaphorobacter sp. (strain TPSY)).